Consider the following 1081-residue polypeptide: MMSSVSTESKLQQAVSLKGVDPETCMIVFKNHWAQVVKILEKHDPLKNTQAKYGSIPPDEASAVQNYVEHMLFLLIEEQAKDAAMGPILEFVVCENIMEKLFLWSLRREFTDETKLEQLKMYEMLVTQSYQPLLHHKPILKPLMMLLSSCSGTATPAVEGKLVVLLNQLCSILAKDPSILELFFHTSEDQGAANFLIFSLLIPFIHREGTVGQQARDALLFIMSLSAENSMVANHIVENTYFCPVLATGLSGLYSSLPTKLEEKGEDWHCILKDDWLLLPALVQFMNSLEFCNAVIQVAHPLIRTQLVSYIYNGFLVPVLAPALHKVTVEEVMTTTAYLDLFLRSISEPALLEIFLRFILLHRHENVHILDTLTSRINTPFRLCVVSLALFRTLIGLHCEDVMLQLVLRYLVPCNHMMLSQRWAVKERDCYSVSAAKLLALTPVCCASGITLTLGNQERDYILWSKCMHDGSGSEEQLLPETPCSPSSPSPPPPPAPAACIVEYGKALDISYLQYLWEAHTNILHCMRDCRVWSALYDGDSPDPETFLQSLSEESRENSGHPEARLPQQSVRTSGQTKDKSQSELEWDDSYDTGISSGADVGSPGPDDEVETPAPPAPIDPPKHIQEMKKNAILLFKGSYIEESDFQDDVMVYRLCAEKDTEDTTEPQKDTSEPQGDTLEPLEDTSEQQEDTSEQLEDTSELQEDTAEPQGDTADPTAEAQPKLQPEAQSLPTSNGPLSSPDPETESQPSRESSDLCQNTFSEAKPENEPGVALALDSELIATTFEAEPQSELAVVSTESEDFIAQYDQIIQELDSGTEGLTEQSIPISEPSLLTQQEERREECKEEEDDDFDSLMAATPAVEAGSSPFGVGEDTAFSSRHPVRTQSTPFTGPFISVVLSKLENMLENSLHVNLLLIGIITQLASYPQPLLRSFLLNTNMVFQPSVRSLYQVLASVKNKIEQFASVERDFPGLLIQAQQYLLFRVDMSDMAPAALTKDPIQEISRPESDKTLLDGPPRVLQPFLGNRAKVTRAPPNLPLPVKNTMLAAALFPEFLKELAALAQEHSILCYKILGDFEDSCC.

4 disordered regions span residues 474 to 496 (SEEQ…PPPA), 544 to 623 (PETF…DPPK), 658 to 770 (EKDT…ENEP), and 863 to 883 (EAGS…RHPV). The span at 486–496 (PSSPSPPPPPA) shows a compositional bias: pro residues. Residues 553–564 (EESRENSGHPEA) show a composition bias toward basic and acidic residues. Polar residues predominate over residues 567-576 (PQQSVRTSGQ). The span at 680-707 (EPLEDTSEQQEDTSEQLEDTSELQEDTA) shows a compositional bias: acidic residues. Composition is skewed to polar residues over residues 727–738 (EAQSLPTSNGPL) and 746–762 (ESQP…NTFS).

This sequence belongs to the FHIP family. As to quaternary structure, may be a component of the FTS/Hook/FHIP complex (FHF complex), composed of AKTIP/FTS, FHIP1B, and one or more members of the Hook family of proteins HOOK1, HOOK2, and HOOK3. May interact directly with AKTIP/FTS.

Functionally, probable component of the FTS/Hook/FHIP complex (FHF complex). FHF complex promotes the distribution of AP-4 complex to the perinuclear area of the cell. The sequence is that of FHF complex subunit HOOK-interacting protein 1A from Mus musculus (Mouse).